Here is a 1353-residue protein sequence, read N- to C-terminus: Xanthine dehydrogenase 2 (1353 aa).

One can recognise a 2Fe-2S ferredoxin-type domain in the interval 7–93; that stretch reads MEAIMYVNGV…GMHVISIEGV (87 aa). Cys45, Cys50, Cys53, Cys75, Cys115, Cys118, Cys151, and Cys153 together coordinate [2Fe-2S] cluster. The region spanning 249–434 is the FAD-binding PCMH-type domain; it reads GGNEGITWYR…LSVFLPWTRP (186 aa). Residues 277-284, Phe357, 367-371, Asp380, Leu424, and Lys442 each bind FAD; these read LLVGNTEV and CIGGN. 2 residues coordinate Mo-molybdopterin: Gln788 and Phe819. 2 residues coordinate substrate: Glu823 and Arg901. Residue Arg933 participates in Mo-molybdopterin binding. Substrate-binding residues include Phe935 and Thr1031. Ala1100 provides a ligand contact to Mo-molybdopterin. Glu1289 serves as the catalytic Proton acceptor.

The protein belongs to the xanthine dehydrogenase family. As to quaternary structure, homodimer. It depends on [2Fe-2S] cluster as a cofactor. The cofactor is FAD. Mo-molybdopterin is required as a cofactor. In terms of tissue distribution, expressed in roots, leaves, stems, flowers and siliques.

It carries out the reaction xanthine + NAD(+) + H2O = urate + NADH + H(+). The catalysed reaction is hypoxanthine + NAD(+) + H2O = xanthine + NADH + H(+). Its function is as follows. Key enzyme involved in purine catabolism. Catalyzes the oxidation of hypoxanthine to xanthine and the oxidation of xanthine to urate. Regulates the level of ureides and plays a role during plant growth and development and senescence. The sequence is that of Xanthine dehydrogenase 2 (XDH2) from Arabidopsis thaliana (Mouse-ear cress).